We begin with the raw amino-acid sequence, 257 residues long: Acetyl-coenzyme A carboxylase carboxyl transferase subunit beta 1 (257 aa).

The region spanning 1–257 (MNINDIFLKR…KMHVNTGGEA (257 aa)) is the CoA carboxyltransferase N-terminal domain.

The protein belongs to the AccD/PCCB family. As to quaternary structure, acetyl-CoA carboxylase is a heterohexamer composed of biotin carboxyl carrier protein (AccB), biotin carboxylase (AccC) and two subunits each of ACCase subunit alpha (AccA) and ACCase subunit beta (AccD).

The protein localises to the cytoplasm. It carries out the reaction N(6)-carboxybiotinyl-L-lysyl-[protein] + acetyl-CoA = N(6)-biotinyl-L-lysyl-[protein] + malonyl-CoA. It functions in the pathway lipid metabolism; malonyl-CoA biosynthesis; malonyl-CoA from acetyl-CoA: step 1/1. Component of the acetyl coenzyme A carboxylase (ACC) complex. Biotin carboxylase (BC) catalyzes the carboxylation of biotin on its carrier protein (BCCP) and then the CO(2) group is transferred by the transcarboxylase to acetyl-CoA to form malonyl-CoA. The polypeptide is Acetyl-coenzyme A carboxylase carboxyl transferase subunit beta 1 (Lachnospira eligens (strain ATCC 27750 / DSM 3376 / VPI C15-48 / C15-B4) (Eubacterium eligens)).